The chain runs to 463 residues: Vicilin (463 aa).

The signal sequence occupies residues 1-27 (MAATTLKDSFPLLTLLGIAFLASVCLS). Residues 35-194 (PFVFESNRFQ…SFNTDYKEIE (160 aa)) form the Cupin type-1 1 domain. The interval 235–257 (LNKNAKSSSKKSTSSESEPFNLR) is disordered. Residues 238-252 (NAKSSSKKSTSSESE) are compositionally biased toward low complexity. One can recognise a Cupin type-1 2 domain in the interval 254–426 (FNLRSREPIY…AFPGSAQEVD (173 aa)).

Belongs to the 7S seed storage protein family.

The protein localises to the vacuole. It is found in the aleurone grain. Its function is as follows. Seed storage protein. The protein is Vicilin of Vicia faba (Broad bean).